The following is a 153-amino-acid chain: UPF0756 membrane protein Lm4b_01579 (153 aa).

The next 4 helical transmembrane spans lie at 6-26 (MLFLLLFLLLGLIAKNNSLII), 54-74 (WGVTIITVAILIPIATGQIGF), 80-100 (SFKSAAGWIGLGAGIAVSILA), and 117-137 (LVFGTILAVVLFRGIAAGPVI).

It belongs to the UPF0756 family.

The protein localises to the cell membrane. This is UPF0756 membrane protein Lm4b_01579 from Listeria monocytogenes serotype 4b (strain CLIP80459).